We begin with the raw amino-acid sequence, 248 residues long: Triosephosphate isomerase (248 aa).

Residues Asn11 and Lys13 each contribute to the substrate site. The Electrophile role is filled by His95. The active-site Proton acceptor is the Glu165.

This sequence belongs to the triosephosphate isomerase family. Homodimer.

It is found in the cytoplasm. It carries out the reaction dihydroxyacetone phosphate = methylglyoxal + phosphate. The enzyme catalyses D-glyceraldehyde 3-phosphate = dihydroxyacetone phosphate. It functions in the pathway carbohydrate degradation; glycolysis; D-glyceraldehyde 3-phosphate from glycerone phosphate: step 1/1. It participates in carbohydrate biosynthesis; gluconeogenesis. In terms of biological role, triosephosphate isomerase is an extremely efficient metabolic enzyme that catalyzes the interconversion between dihydroxyacetone phosphate (DHAP) and D-glyceraldehyde-3-phosphate (G3P) in glycolysis and gluconeogenesis. Functionally, it is also responsible for the non-negligible production of methylglyoxal a reactive cytotoxic side-product that modifies and can alter proteins, DNA and lipids. The sequence is that of Triosephosphate isomerase (tpi1) from Xenopus tropicalis (Western clawed frog).